We begin with the raw amino-acid sequence, 262 residues long: tRNA pseudouridine synthase A (262 aa).

The active-site Nucleophile is D51. Y109 serves as a coordination point for substrate.

It belongs to the tRNA pseudouridine synthase TruA family. As to quaternary structure, homodimer.

It carries out the reaction uridine(38/39/40) in tRNA = pseudouridine(38/39/40) in tRNA. Its function is as follows. Formation of pseudouridine at positions 38, 39 and 40 in the anticodon stem and loop of transfer RNAs. The polypeptide is tRNA pseudouridine synthase A (Legionella pneumophila (strain Lens)).